Reading from the N-terminus, the 66-residue chain is DNA-directed RNA polymerase subunit Rpo10 (66 aa).

Positions 7, 10, 44, and 45 each coordinate Zn(2+).

It belongs to the archaeal Rpo10/eukaryotic RPB10 RNA polymerase subunit family. Part of the RNA polymerase complex. Requires Zn(2+) as cofactor.

The protein localises to the cytoplasm. It catalyses the reaction RNA(n) + a ribonucleoside 5'-triphosphate = RNA(n+1) + diphosphate. DNA-dependent RNA polymerase (RNAP) catalyzes the transcription of DNA into RNA using the four ribonucleoside triphosphates as substrates. In Pyrobaculum aerophilum (strain ATCC 51768 / DSM 7523 / JCM 9630 / CIP 104966 / NBRC 100827 / IM2), this protein is DNA-directed RNA polymerase subunit Rpo10.